Here is a 154-residue protein sequence, read N- to C-terminus: Transcriptional repressor NrdR (154 aa).

A zinc finger spans residues 3 to 34 (CPFCRHPDSRVVDSREADEGQAIRRRRSCPEC). The region spanning 46 to 136 (LSVVKRSGVT…VYRSFSSAED (91 aa)) is the ATP-cone domain.

The protein belongs to the NrdR family. Requires Zn(2+) as cofactor.

Functionally, negatively regulates transcription of bacterial ribonucleotide reductase nrd genes and operons by binding to NrdR-boxes. The chain is Transcriptional repressor NrdR from Rhodococcus jostii (strain RHA1).